Consider the following 259-residue polypeptide: Deoxyribose-phosphate aldolase (259 aa).

Asp-102 functions as the Proton donor/acceptor in the catalytic mechanism. The active-site Schiff-base intermediate with acetaldehyde is Lys-167. Lys-201 functions as the Proton donor/acceptor in the catalytic mechanism.

It belongs to the DeoC/FbaB aldolase family. DeoC type 2 subfamily.

Its subcellular location is the cytoplasm. The catalysed reaction is 2-deoxy-D-ribose 5-phosphate = D-glyceraldehyde 3-phosphate + acetaldehyde. The protein operates within carbohydrate degradation; 2-deoxy-D-ribose 1-phosphate degradation; D-glyceraldehyde 3-phosphate and acetaldehyde from 2-deoxy-alpha-D-ribose 1-phosphate: step 2/2. In terms of biological role, catalyzes a reversible aldol reaction between acetaldehyde and D-glyceraldehyde 3-phosphate to generate 2-deoxy-D-ribose 5-phosphate. This chain is Deoxyribose-phosphate aldolase, found in Edwardsiella ictaluri (strain 93-146).